A 542-amino-acid polypeptide reads, in one-letter code: Adenine deaminase (542 aa).

It belongs to the metallo-dependent hydrolases superfamily. Adenine deaminase family. The cofactor is Mn(2+).

The enzyme catalyses adenine + H2O + H(+) = hypoxanthine + NH4(+). The chain is Adenine deaminase from Methanosphaera stadtmanae (strain ATCC 43021 / DSM 3091 / JCM 11832 / MCB-3).